Here is an 875-residue protein sequence, read N- to C-terminus: Kelch-like protein 29 (875 aa).

Over residues 113-126 (IRWGQTPVNQSTPW) the composition is skewed to polar residues. 2 disordered regions span residues 113-145 (IRWGQTPVNQSTPWDTDEPPSKQMRESDNPGTG) and 240-291 (GVGQ…DSAH). Residues 131 to 140 (PPSKQMRESD) are compositionally biased toward basic and acidic residues. Over residues 270 to 280 (PSAALPSSVPA) the composition is skewed to low complexity. The 73-residue stretch at 329–401 (TDLKIVVEGR…VYTGSLVIDS (73 aa)) folds into the BTB domain. Kelch repeat units lie at residues 585 to 635 (VIVL…VSAG), 637 to 683 (NIYL…VYDG), 684 to 730 (KIYT…VCGG), 732 to 778 (IYVF…TLNG), 779 to 821 (FVFI…VLDG), and 822 to 870 (KIYA…VIKK).

This Mus musculus (Mouse) protein is Kelch-like protein 29 (Klhl29).